Here is a 196-residue protein sequence, read N- to C-terminus: Probable nicotinate-nucleotide adenylyltransferase (196 aa).

The protein belongs to the NadD family.

It catalyses the reaction nicotinate beta-D-ribonucleotide + ATP + H(+) = deamido-NAD(+) + diphosphate. The protein operates within cofactor biosynthesis; NAD(+) biosynthesis; deamido-NAD(+) from nicotinate D-ribonucleotide: step 1/1. In terms of biological role, catalyzes the reversible adenylation of nicotinate mononucleotide (NaMN) to nicotinic acid adenine dinucleotide (NaAD). The protein is Probable nicotinate-nucleotide adenylyltransferase of Caldicellulosiruptor bescii (strain ATCC BAA-1888 / DSM 6725 / KCTC 15123 / Z-1320) (Anaerocellum thermophilum).